The sequence spans 526 residues: NAD(P)H-quinone oxidoreductase subunit 2 (526 aa).

A run of 14 helical transmembrane segments spans residues 16 to 36 (ILPE…DLIL), 43 to 63 (WTPY…YTQW), 80 to 100 (LSIA…LMSV), 110 to 130 (LGEF…LSGA), 133 to 153 (LVMI…LTGY), 168 to 188 (LLIG…LYGL), 212 to 232 (LALV…ISAV), 246 to 266 (PTPV…ALAI), 280 to 300 (WHFV…VVAL), 308 to 328 (LLAY…LANT), 336 to 356 (IFYL…VILF), 380 to 400 (LGLS…GFFG), 402 to 422 (IYLF…LGLI), and 468 to 488 (VGLI…NPLF).

The protein belongs to the complex I subunit 2 family. As to quaternary structure, NDH-1 can be composed of about 15 different subunits; different subcomplexes with different compositions have been identified which probably have different functions.

It localises to the cellular thylakoid membrane. It carries out the reaction a plastoquinone + NADH + (n+1) H(+)(in) = a plastoquinol + NAD(+) + n H(+)(out). The enzyme catalyses a plastoquinone + NADPH + (n+1) H(+)(in) = a plastoquinol + NADP(+) + n H(+)(out). Its function is as follows. NDH-1 shuttles electrons from an unknown electron donor, via FMN and iron-sulfur (Fe-S) centers, to quinones in the respiratory and/or the photosynthetic chain. The immediate electron acceptor for the enzyme in this species is believed to be plastoquinone. Couples the redox reaction to proton translocation, and thus conserves the redox energy in a proton gradient. Cyanobacterial NDH-1 also plays a role in inorganic carbon-concentration. The protein is NAD(P)H-quinone oxidoreductase subunit 2 of Trichodesmium erythraeum (strain IMS101).